The primary structure comprises 135 residues: Large ribosomal subunit protein uL15 (135 aa).

Residues 21–66 (VGRGQGSGMGKTATRGGKGQTARTGYKAKRGFEGGQQPLQRRLPKI) are disordered.

Belongs to the universal ribosomal protein uL15 family. Part of the 50S ribosomal subunit.

Functionally, binds to the 23S rRNA. The protein is Large ribosomal subunit protein uL15 of Helicobacter pylori (strain HPAG1).